Reading from the N-terminus, the 78-residue chain is Acyl carrier protein (78 aa).

Residues 2–77 form the Carrier domain; sequence SEIAQKVKSI…QAIAYLEQHV (76 aa). Residue S37 is modified to O-(pantetheine 4'-phosphoryl)serine.

This sequence belongs to the acyl carrier protein (ACP) family. In terms of processing, 4'-phosphopantetheine is transferred from CoA to a specific serine of apo-ACP by AcpS. This modification is essential for activity because fatty acids are bound in thioester linkage to the sulfhydryl of the prosthetic group.

Its subcellular location is the cytoplasm. It participates in lipid metabolism; fatty acid biosynthesis. Its function is as follows. Carrier of the growing fatty acid chain in fatty acid biosynthesis. This Cytophaga hutchinsonii (strain ATCC 33406 / DSM 1761 / CIP 103989 / NBRC 15051 / NCIMB 9469 / D465) protein is Acyl carrier protein.